Consider the following 249-residue polypeptide: Acetylglutamate kinase (249 aa).

Substrate contacts are provided by residues 38–39, Arg60, and Asn147; that span reads GG.

Belongs to the acetylglutamate kinase family. ArgB subfamily.

The protein resides in the cytoplasm. It carries out the reaction N-acetyl-L-glutamate + ATP = N-acetyl-L-glutamyl 5-phosphate + ADP. It participates in amino-acid biosynthesis; L-arginine biosynthesis; N(2)-acetyl-L-ornithine from L-glutamate: step 2/4. Functionally, catalyzes the ATP-dependent phosphorylation of N-acetyl-L-glutamate. This is Acetylglutamate kinase from Deinococcus radiodurans (strain ATCC 13939 / DSM 20539 / JCM 16871 / CCUG 27074 / LMG 4051 / NBRC 15346 / NCIMB 9279 / VKM B-1422 / R1).